The following is a 776-amino-acid chain: Methionine--tRNA ligase (776 aa).

The 'HIGH' region motif lies at 10–20 (PYSNGPIHLGH). Residues cysteine 143, cysteine 146, cysteine 156, and cysteine 159 each coordinate Zn(2+). The 'KMSKS' region signature appears at 375–379 (KFSKS). Lysine 378 contacts ATP. The 101-residue stretch at 676 to 776 (DFAKLDMRVG…KPISLGSKVR (101 aa)) folds into the tRNA-binding domain.

It belongs to the class-I aminoacyl-tRNA synthetase family. MetG type 1 subfamily. As to quaternary structure, homodimer. The cofactor is Zn(2+).

It localises to the cytoplasm. It carries out the reaction tRNA(Met) + L-methionine + ATP = L-methionyl-tRNA(Met) + AMP + diphosphate. In terms of biological role, is required not only for elongation of protein synthesis but also for the initiation of all mRNA translation through initiator tRNA(fMet) aminoacylation. This Nanoarchaeum equitans (strain Kin4-M) protein is Methionine--tRNA ligase (metG).